Reading from the N-terminus, the 354-residue chain is UDP-N-acetylglucosamine--N-acetylmuramyl-(pentapeptide) pyrophosphoryl-undecaprenol N-acetylglucosamine transferase (354 aa).

Residues 13–15, asparagine 125, serine 189, isoleucine 242, 261–266, and glutamine 286 contribute to the UDP-N-acetyl-alpha-D-glucosamine site; these read SGG and ALTVSE.

This sequence belongs to the glycosyltransferase 28 family. MurG subfamily.

It localises to the cell inner membrane. It catalyses the reaction di-trans,octa-cis-undecaprenyl diphospho-N-acetyl-alpha-D-muramoyl-L-alanyl-D-glutamyl-meso-2,6-diaminopimeloyl-D-alanyl-D-alanine + UDP-N-acetyl-alpha-D-glucosamine = di-trans,octa-cis-undecaprenyl diphospho-[N-acetyl-alpha-D-glucosaminyl-(1-&gt;4)]-N-acetyl-alpha-D-muramoyl-L-alanyl-D-glutamyl-meso-2,6-diaminopimeloyl-D-alanyl-D-alanine + UDP + H(+). It functions in the pathway cell wall biogenesis; peptidoglycan biosynthesis. Its function is as follows. Cell wall formation. Catalyzes the transfer of a GlcNAc subunit on undecaprenyl-pyrophosphoryl-MurNAc-pentapeptide (lipid intermediate I) to form undecaprenyl-pyrophosphoryl-MurNAc-(pentapeptide)GlcNAc (lipid intermediate II). The polypeptide is UDP-N-acetylglucosamine--N-acetylmuramyl-(pentapeptide) pyrophosphoryl-undecaprenol N-acetylglucosamine transferase (Buchnera aphidicola subsp. Acyrthosiphon pisum (strain 5A)).